A 1544-amino-acid polypeptide reads, in one-letter code: Lysophospholipase NTE1 (1544 aa).

Residues 1 to 37 are Cytoplasmic-facing; that stretch reads MSTIEIVSTVAEYTEIHSPVSSKFLLPSARDSSSSIS. The chain crosses the membrane as a helical span at residues 38-58; that stretch reads LFSAIFWFWSWLFFKIMNIFL. The Lumenal segment spans residues 59–76; sequence YYIPNIIVNLFSVNFQIT. The helical transmembrane segment at 77 to 97 threads the bilayer; sequence LSLSSIVITLTGIISFCFLIV. Topologically, residues 98–1544 are cytoplasmic; sequence RYKYLTRYSK…RKSLYRRSSI (1447 aa). Disordered stretches follow at residues 265–312 and 424–552; these read RLFS…RNYP and ESPS…EETE. Polar residues predominate over residues 275–310; the sequence is NPASNPLSPDNTGSKSFDPLSSGNFNDTSLSSSDRN. Positions 425–447 are enriched in low complexity; the sequence is SPSVSINKTSSSSSSLPKKSTTS. Polar residues-rich tracts occupy residues 448 to 458 and 517 to 536; these read LRPLNRNQSSR and QISSNGGPTLKGHSSSTTKF. Residues 537–546 show a composition bias toward basic and acidic residues; that stretch reads ENIRDRTFSD. A nucleoside 3',5'-cyclic phosphate is bound by residues 681-811 and 807-960; these read SFES…LKSL and KLKS…VANK. One can recognise a PNPLA domain in the interval 1237-1401; that stretch reads LVLGGGGSRG…LDNLPVMEMK (165 aa). Positions 1241–1246 match the GXGXXG motif; the sequence is GGGSRG. A GXSXG motif is present at residues 1268–1272; the sequence is GTSIG. The active-site Nucleophile is Ser-1270. Catalysis depends on Asp-1388, which acts as the Proton acceptor. Residues 1388-1390 carry the DGA/G motif; the sequence is DGG.

This sequence belongs to the NTE family.

It is found in the endoplasmic reticulum membrane. The catalysed reaction is a 1-acyl-sn-glycero-3-phosphocholine + H2O = sn-glycerol 3-phosphocholine + a fatty acid + H(+). With respect to regulation, inhibited by organophosphorus esters. Its function is as follows. Intracellular phospholipase B that catalyzes the double deacylation of phosphatidylcholine (PC) to glycerophosphocholine (GroPCho). Plays an important role in membrane lipid homeostasis. Responsible for the rapid PC turnover in response to inositol, elevated temperatures, or when choline is present in the growth medium. This Debaryomyces hansenii (strain ATCC 36239 / CBS 767 / BCRC 21394 / JCM 1990 / NBRC 0083 / IGC 2968) (Yeast) protein is Lysophospholipase NTE1 (NTE1).